The chain runs to 229 residues: ATP synthase subunit a 1 (229 aa).

Transmembrane regions (helical) follow at residues 25 to 45 (ADAVAYTWLIMLLLLLFSFLA), 86 to 106 (VATVGLFVLVSNLIGLIPGFF), 111 to 131 (NINTTAACAIVVFIATHVVGI), 142 to 162 (FCGPILWLAPVMFFIEVIGHL), 181 to 201 (LVLIIFFGLAPFLVPLPMMLM), and 202 to 222 (GVLVSFIQAFVFMLLTMIYIQ).

The protein belongs to the ATPase A chain family. F-type ATPases have 2 components, CF(1) - the catalytic core - and CF(0) - the membrane proton channel. CF(1) has five subunits: alpha(3), beta(3), gamma(1), delta(1), epsilon(1). CF(0) has three main subunits: a(1), b(2) and c(9-12). The alpha and beta chains form an alternating ring which encloses part of the gamma chain. CF(1) is attached to CF(0) by a central stalk formed by the gamma and epsilon chains, while a peripheral stalk is formed by the delta and b chains.

It is found in the cell inner membrane. Functionally, key component of the proton channel; it plays a direct role in the translocation of protons across the membrane. This is ATP synthase subunit a 1 from Pelobacter propionicus (strain DSM 2379 / NBRC 103807 / OttBd1).